Reading from the N-terminus, the 358-residue chain is UDP-N-acetylglucosamine--N-acetylmuramyl-(pentapeptide) pyrophosphoryl-undecaprenol N-acetylglucosamine transferase (358 aa).

UDP-N-acetyl-alpha-D-glucosamine-binding positions include 11–13 (TGG), Asn124, Arg164, Ser195, and Gln291.

It belongs to the glycosyltransferase 28 family. MurG subfamily.

The protein localises to the cell inner membrane. The enzyme catalyses di-trans,octa-cis-undecaprenyl diphospho-N-acetyl-alpha-D-muramoyl-L-alanyl-D-glutamyl-meso-2,6-diaminopimeloyl-D-alanyl-D-alanine + UDP-N-acetyl-alpha-D-glucosamine = di-trans,octa-cis-undecaprenyl diphospho-[N-acetyl-alpha-D-glucosaminyl-(1-&gt;4)]-N-acetyl-alpha-D-muramoyl-L-alanyl-D-glutamyl-meso-2,6-diaminopimeloyl-D-alanyl-D-alanine + UDP + H(+). The protein operates within cell wall biogenesis; peptidoglycan biosynthesis. In terms of biological role, cell wall formation. Catalyzes the transfer of a GlcNAc subunit on undecaprenyl-pyrophosphoryl-MurNAc-pentapeptide (lipid intermediate I) to form undecaprenyl-pyrophosphoryl-MurNAc-(pentapeptide)GlcNAc (lipid intermediate II). In Leptospira interrogans serogroup Icterohaemorrhagiae serovar copenhageni (strain Fiocruz L1-130), this protein is UDP-N-acetylglucosamine--N-acetylmuramyl-(pentapeptide) pyrophosphoryl-undecaprenol N-acetylglucosamine transferase.